Reading from the N-terminus, the 222-residue chain is Octanoyltransferase (222 aa).

The region spanning 35–210 (ETTPDELWLV…EFVHLLGYPK (176 aa)) is the BPL/LPL catalytic domain. Substrate contacts are provided by residues 74 to 81 (RGGQVTYH), 141 to 143 (SLG), and 154 to 156 (GLA). Cys172 serves as the catalytic Acyl-thioester intermediate.

This sequence belongs to the LipB family.

Its subcellular location is the cytoplasm. The catalysed reaction is octanoyl-[ACP] + L-lysyl-[protein] = N(6)-octanoyl-L-lysyl-[protein] + holo-[ACP] + H(+). The protein operates within protein modification; protein lipoylation via endogenous pathway; protein N(6)-(lipoyl)lysine from octanoyl-[acyl-carrier-protein]: step 1/2. Catalyzes the transfer of endogenously produced octanoic acid from octanoyl-acyl-carrier-protein onto the lipoyl domains of lipoate-dependent enzymes. Lipoyl-ACP can also act as a substrate although octanoyl-ACP is likely to be the physiological substrate. The sequence is that of Octanoyltransferase from Serratia proteamaculans (strain 568).